The sequence spans 805 residues: MSKLTTGSFSIEDLESVQITINNIVGAAKEAAEEKAKELGPMGPTAMAGLASYRSWNLLLLDRYEPVLTPMCDQCCYCTYGPCDLSGNKRGACGIDMAGQTGREFFLRVITGTACHAAHGRHLLDHVIEVFGEDLPLNLGESNVLTPNVTICTGLSPKTLGECRAPMEYVEEQLTQLLATIHAGQESAEIDYDSKALFSGSLDHVGMEVSDIAQVSAYDFPKADPEAPLIEIGMGSIDKSKPLIVAIGHNVAGVTYIMDYMEENNLTDKMEIAGLCCTAFDMTRYKEADRRAPYAKIVGSLAKELKVIRSGMPDVIVVDEQCVRGDVLSESMKLKIPVIASNEKIMMGLPDRTDADVDSIVEEIKSGAIPGCVMLDYDKLGELIPKIAEVMAPIRDAEGITAIPTDEEFKVYIDKCVKCGECMLACPEELDIPEALEYAAKGSYEYLEALHDVCIGCRRCEQVCKKEIPILNVLEKAAQKSISEEKGWVRSGRGQASDAEIRAEGLNLVMGTTPGIIAIIGCPNYPAGTKDVYNIAEEFLKRNYLVVVSGCSAMDIGMYKDDDGKTLYERYPGTFSGGGLLNTGSCVSNAHITGAAEKVAGIFAQRTLAGNLAEVADYTLNRVGACGLAWGAYSQKAASIGTGCNIYGIPAVLGPHSSKYRRALIAKTYEEDKWKVFDARDGSEMNIPPAPEFLLTTAETWQEALPMMAKACIRPSDNNMGRSIKLTHWMELSKKYLGVEPEDWWKFVRNEADLPLAKREELLKRLEAEQGWEIDWKRKKIISGPKIKFDVSAQPTNLKRLCKEA.

Cysteine 72, cysteine 75, cysteine 76, cysteine 78, cysteine 83, and cysteine 93 together coordinate [4Fe-4S] cluster. Histidine 116 lines the CO pocket. Histidine 249, cysteine 277, and cysteine 322 together coordinate [Ni-4Fe-4S] cluster. 4Fe-4S ferredoxin-type domains follow at residues 407-435 (EEFKVYIDKCVKCGECMLACPEELDIPEA) and 445-474 (EYLEALHDVCIGCRRCEQVCKKEIPILNVL). [4Fe-4S] cluster-binding residues include cysteine 416, cysteine 419, cysteine 422, cysteine 426, cysteine 454, cysteine 457, cysteine 460, and cysteine 464. Residues cysteine 522, cysteine 551, and cysteine 586 each coordinate [Ni-4Fe-4S] cluster.

The protein belongs to the Ni-containing carbon monoxide dehydrogenase family. In terms of assembly, heterotetramer of two alpha and two epsilon subunits. The ACDS complex is made up of alpha, epsilon, beta, gamma and delta subunits with a probable stoichiometry of (alpha(2)epsilon(2))(4)-beta(8)-(gamma(1)delta(1))(8). [4Fe-4S] cluster is required as a cofactor. It depends on [Ni-4Fe-4S] cluster as a cofactor.

It carries out the reaction CO + 2 oxidized [2Fe-2S]-[ferredoxin] + H2O = 2 reduced [2Fe-2S]-[ferredoxin] + CO2 + 2 H(+). Its pathway is one-carbon metabolism; methanogenesis from acetate. Its function is as follows. Part of the ACDS complex that catalyzes the reversible cleavage of acetyl-CoA, allowing growth on acetate as sole source of carbon and energy. The alpha-epsilon subcomponent functions as a carbon monoxide dehydrogenase. The chain is Acetyl-CoA decarbonylase/synthase complex subunit alpha 3 from Methanosarcina acetivorans (strain ATCC 35395 / DSM 2834 / JCM 12185 / C2A).